The chain runs to 179 residues: Ubiquitin-conjugating enzyme E2 2 (179 aa).

Residues 1 to 28 (MSTPARRRLMRDFKRMQQDPPSGVSASP) form a disordered region. Positions 4–150 (PARRRLMRDF…VRETVENSWN (147 aa)) constitute a UBC core domain. Cys-88 serves as the catalytic Glycyl thioester intermediate. Residues 145-179 (VENSWNDDDDEEEEEEDEDEAEDEDDDDDDNIDED) form a disordered region. Residues 149-179 (WNDDDDEEEEEEDEDEAEDEDDDDDDNIDED) show a composition bias toward acidic residues. Residues 151–179 (DDDDEEEEEEDEDEAEDEDDDDDDNIDED) are acidic tail.

It belongs to the ubiquitin-conjugating enzyme family.

The protein resides in the cytoplasm. It localises to the nucleus. The catalysed reaction is S-ubiquitinyl-[E1 ubiquitin-activating enzyme]-L-cysteine + [E2 ubiquitin-conjugating enzyme]-L-cysteine = [E1 ubiquitin-activating enzyme]-L-cysteine + S-ubiquitinyl-[E2 ubiquitin-conjugating enzyme]-L-cysteine.. The protein operates within protein modification; protein ubiquitination. Functionally, catalyzes the covalent attachment of ubiquitin to other proteins. Plays a role in transcription regulation by catalyzing the monoubiquitination of histone H2B to form H2BK123ub1. H2BK123ub1 gives a specific tag for epigenetic transcriptional activation and is also a prerequisite for H3K4me and H3K79me formation. Also involved in postreplication repair of UV-damaged DNA, in N-end rule-dependent protein degradation and in sporulation. The polypeptide is Ubiquitin-conjugating enzyme E2 2 (UBC2) (Candida albicans (strain SC5314 / ATCC MYA-2876) (Yeast)).